Here is a 356-residue protein sequence, read N- to C-terminus: D-alanine--D-alanine ligase (356 aa).

Positions 134-339 (KQLFAHRGLP…YSDLIKKLIE (206 aa)) constitute an ATP-grasp domain. 167–222 (HDKLEYPVFVKPANLGSSVGISKCNNEEELKNGIEEAFQFDRKLVIEQGIEAREIE) contacts ATP. Positions 293, 306, and 308 each coordinate Mg(2+).

This sequence belongs to the D-alanine--D-alanine ligase family. It depends on Mg(2+) as a cofactor. The cofactor is Mn(2+).

It is found in the cytoplasm. It carries out the reaction 2 D-alanine + ATP = D-alanyl-D-alanine + ADP + phosphate + H(+). The protein operates within cell wall biogenesis; peptidoglycan biosynthesis. Functionally, cell wall formation. The sequence is that of D-alanine--D-alanine ligase from Staphylococcus saprophyticus subsp. saprophyticus (strain ATCC 15305 / DSM 20229 / NCIMB 8711 / NCTC 7292 / S-41).